Here is a 510-residue protein sequence, read N- to C-terminus: NAD(P)H-quinone oxidoreductase subunit 2 B, chloroplastic (510 aa).

13 helical membrane-spanning segments follow: residues 24–44 (LLLF…GLIL), 57–77 (IPWL…ALLF), 99–119 (IFQF…VEYI), 124–144 (MAIT…MFLC), 149–169 (LITI…LSGY), 183–203 (YLLM…WLYG), 227–247 (PGIS…LSPA), 295–315 (WHLL…LIAI), 323–343 (MLAY…IVGD), 354–374 (YMLF…LFGL), 395–415 (ALSL…AGFF), 418–438 (LYLF…IGLL), and 484–504 (MIVC…IIAI).

The protein belongs to the complex I subunit 2 family. As to quaternary structure, NDH is composed of at least 16 different subunits, 5 of which are encoded in the nucleus.

It is found in the plastid. It localises to the chloroplast thylakoid membrane. The enzyme catalyses a plastoquinone + NADH + (n+1) H(+)(in) = a plastoquinol + NAD(+) + n H(+)(out). It catalyses the reaction a plastoquinone + NADPH + (n+1) H(+)(in) = a plastoquinol + NADP(+) + n H(+)(out). In terms of biological role, NDH shuttles electrons from NAD(P)H:plastoquinone, via FMN and iron-sulfur (Fe-S) centers, to quinones in the photosynthetic chain and possibly in a chloroplast respiratory chain. The immediate electron acceptor for the enzyme in this species is believed to be plastoquinone. Couples the redox reaction to proton translocation, and thus conserves the redox energy in a proton gradient. The polypeptide is NAD(P)H-quinone oxidoreductase subunit 2 B, chloroplastic (Helianthus annuus (Common sunflower)).